A 497-amino-acid chain; its full sequence is Probable sensor kinase SilS (497 aa).

Topologically, residues 1-15 are cytoplasmic; the sequence is MHSKPSRLPFSLALR. A helical transmembrane segment spans residues 16-36; it reads LTFFISLSTILAFIAFTWFML. The Periplasmic portion of the chain corresponds to 37 to 186; the sequence is HSVEKHFAEQ…HLHYLDALKK (150 aa). Residues 187 to 207 traverse the membrane as a helical segment; that stretch reads NLIAIAVVISLLIVLIIRIAV. The 54-residue stretch at 208-261 folds into the HAMP domain; sequence RQGHLPLRNVSNAIKNITSENLDARLEPTRVPIELEQLVISFNHMIGKIEDVFT. Over 208–497 the chain is Cytoplasmic; sequence RQGHLPLRNV…KMIPDTQCWE (290 aa). The Histidine kinase domain occupies 269–487; it reads DIAHEIRTPI…RFILSVPRLE (219 aa). The residue at position 272 (His-272) is a Phosphohistidine; by autocatalysis.

The protein localises to the cell inner membrane. The enzyme catalyses ATP + protein L-histidine = ADP + protein N-phospho-L-histidine.. Component of the sil cation-efflux system that confers resistance to silver. Probable member of a two-component regulatory system SilS/SilR. May activate SilR by phosphorylation. The sequence is that of Probable sensor kinase SilS (silS) from Salmonella typhimurium.